We begin with the raw amino-acid sequence, 963 residues long: Protein bicaudal C homolog 1-A (963 aa).

The tract at residues 1-48 (MAAQCESIGGDMNQSDPGSNSERSADSPVPGSEDDSPHDPEWREERFR) is disordered. Residues 12–22 (MNQSDPGSNSE) are compositionally biased toward polar residues. A compositionally biased stretch (basic and acidic residues) spans 35 to 48 (DSPHDPEWREERFR). 2 KH domains span residues 128–195 (RVTL…RVRI) and 280–344 (PVST…RQYL). Polar residues predominate over residues 592 to 601 (EASRQSNNHS). Disordered regions lie at residues 592–613 (EASR…TDPE), 668–713 (ERLL…TSQS), and 767–834 (LRRA…NKSA). Basic and acidic residues-rich tracts occupy residues 602–612 (SAEEVNSKTDP) and 683–696 (VTDK…RAAE). Residues 784–797 (ENSSLSRSNSREQL) are compositionally biased toward low complexity. The span at 812 to 824 (IDSSQNDYSSSIG) shows a compositional bias: polar residues. The SAM domain maps to 862–925 (FKGSDLPELF…LLAISELNKN (64 aa)).

The protein belongs to the BicC family.

Putative RNA-binding protein. May be involved in regulating gene expression during embryonic development. Seems to be involved in endoderm formation. Ectopic expression results in endoderm formation in the absence of mesoderm induction. In Xenopus laevis (African clawed frog), this protein is Protein bicaudal C homolog 1-A (bicc1-a).